The chain runs to 333 residues: S-adenosylmethionine decarboxylase proenzyme (333 aa).

Phenylalanine 7 serves as a coordination point for substrate. Catalysis depends on residues glutamate 8 and glutamate 11. Glutamate 67 lines the substrate pocket. The Schiff-base intermediate with substrate; via pyruvic acid role is filled by serine 68. At serine 68 the chain carries Pyruvic acid (Ser); by autocatalysis. The active-site Proton donor; for catalytic activity is the cysteine 82. Residue phenylalanine 223 coordinates substrate. Catalysis depends on proton acceptor; for processing activity residues serine 229 and histidine 243. Substrate is bound at residue glutamate 247. A Phosphoserine modification is found at serine 298.

It belongs to the eukaryotic AdoMetDC family. Heterotetramer of two alpha and two beta chains. The cofactor is pyruvate. Is synthesized initially as an inactive proenzyme. Formation of the active enzyme involves a self-maturation process in which the active site pyruvoyl group is generated from an internal serine residue via an autocatalytic post-translational modification. Two non-identical subunits are generated from the proenzyme in this reaction, and the pyruvate is formed at the N-terminus of the alpha chain, which is derived from the carboxyl end of the proenzyme. The post-translation cleavage follows an unusual pathway, termed non-hydrolytic serinolysis, in which the side chain hydroxyl group of the serine supplies its oxygen atom to form the C-terminus of the beta chain, while the remainder of the serine residue undergoes an oxidative deamination to produce ammonia and the pyruvoyl group blocking the N-terminus of the alpha chain.

The catalysed reaction is S-adenosyl-L-methionine + H(+) = S-adenosyl 3-(methylsulfanyl)propylamine + CO2. The protein operates within amine and polyamine biosynthesis; S-adenosylmethioninamine biosynthesis; S-adenosylmethioninamine from S-adenosyl-L-methionine: step 1/1. In terms of biological role, essential for biosynthesis of the polyamines spermidine and spermine. Promotes maintenance and self-renewal of embryonic stem cells, by maintaining spermine levels. In Rattus norvegicus (Rat), this protein is S-adenosylmethionine decarboxylase proenzyme (Amd1).